Here is a 555-residue protein sequence, read N- to C-terminus: GMP synthase [glutamine-hydrolyzing] (555 aa).

Residues 8–234 form the Glutamine amidotransferase type-1 domain; that stretch reads KILVLNFGSQ…AYNICKCKKQ (227 aa). The Nucleophile; for GATase activity role is filled by Cys89. Residues Gln93, Asn169, Asp172, and His208 each coordinate L-glutamine. Active-site for GATase activity residues include His208 and Glu210. The GMPS ATP-PPase domain maps to 235–430; that stretch reads FDPIRYHELE…LNLPEEITNR (196 aa). 262–268 contributes to the ATP binding site; the sequence is SGGIDST. Residues Arg336, Gln476, Lys547, Ile552, and Glu553 each contribute to the XMP site.

Homodimer (via the GMPS ATP-PPase domain). Requires Mg(2+) as cofactor.

It carries out the reaction XMP + L-glutamine + ATP + H2O = GMP + L-glutamate + AMP + diphosphate + 2 H(+). The protein operates within purine metabolism; GMP biosynthesis; GMP from XMP (L-Gln route): step 1/1. Its activity is regulated as follows. The GATase domain is allosterically activated by the binding of substrates, ATP and XMP, to the ATPPase domain, thus ensuring that glutamine hydrolysis occurs only when the ATPPase domain is primed to receive ammonia. Inhibited by Na(+). Inhibited by the reaction product GMP. In terms of biological role, catalyzes the conversion of xanthine monophosphate (XMP) to GMP in the presence of glutamine and ATP through an adenyl-XMP intermediate, which is the final step of de novo synthesis of GMP. The conversion of XMP to GMP involves the coordinated action of the glutamine amidotransferase (GATase) domain that catalyzes the hydrolysis of the amide side chain of glutamine producing ammonia and the ATP pyrophosphatase (ATPPase) domain that catalyzes the synthesis of adenyl-XMP intermediate from ATP. The ammonia produced by the GATase domain is tunnelled to the ATP-PPase domain where it attacks the adenyl-XMP intermediate generating GMP. This is GMP synthase [glutamine-hydrolyzing] from Plasmodium falciparum (isolate 3D7).